Consider the following 322-residue polypeptide: Aspartate carbamoyltransferase catalytic subunit (322 aa).

Arg65 and Thr66 together coordinate carbamoyl phosphate. L-aspartate is bound at residue Lys93. 3 residues coordinate carbamoyl phosphate: Arg115, His143, and Gln146. Arg176 and Arg230 together coordinate L-aspartate. Residues Gly271 and Pro272 each contribute to the carbamoyl phosphate site.

This sequence belongs to the aspartate/ornithine carbamoyltransferase superfamily. ATCase family. As to quaternary structure, heterododecamer (2C3:3R2) of six catalytic PyrB chains organized as two trimers (C3), and six regulatory PyrI chains organized as three dimers (R2).

The enzyme catalyses carbamoyl phosphate + L-aspartate = N-carbamoyl-L-aspartate + phosphate + H(+). It functions in the pathway pyrimidine metabolism; UMP biosynthesis via de novo pathway; (S)-dihydroorotate from bicarbonate: step 2/3. Functionally, catalyzes the condensation of carbamoyl phosphate and aspartate to form carbamoyl aspartate and inorganic phosphate, the committed step in the de novo pyrimidine nucleotide biosynthesis pathway. This chain is Aspartate carbamoyltransferase catalytic subunit, found in Brucella anthropi (strain ATCC 49188 / DSM 6882 / CCUG 24695 / JCM 21032 / LMG 3331 / NBRC 15819 / NCTC 12168 / Alc 37) (Ochrobactrum anthropi).